The chain runs to 357 residues: Embryonic growth/differentiation factor 1 (357 aa).

The first 23 residues, 1–23 (MLPVCHRFCDHLLLLLLLPSTTL), serve as a signal peptide directing secretion. The propeptide occupies 24–237 (APAPASMGPA…RLCPLPRLRR (214 aa)). A glycan (N-linked (GlcNAc...) asparagine) is linked at Asn-191. 3 disulfides stabilise this stretch: Cys-251–Cys-322, Cys-280–Cys-354, and Cys-284–Cys-356.

The protein belongs to the TGF-beta family. As to quaternary structure, homodimer; disulfide-linked. Expressed almost exclusively in the nervous system.

It localises to the secreted. May mediate cell differentiation events during embryonic development. This is Embryonic growth/differentiation factor 1 (Gdf1) from Mus musculus (Mouse).